The primary structure comprises 801 residues: Na(+)/H(+) antiporter subunit A1 (801 aa).

The next 20 helical transmembrane spans lie at 1–21 (MSLL…IPFL), 30–50 (LGWF…SLIS), 79–99 (LGLL…LYSI), 117–137 (LFMG…LYLF), 166–186 (LIIT…LSLA), 206–226 (PFFI…SAQV), 228–250 (FYIW…HSAT), 265–285 (IFAI…ITLF), 300–320 (ILAF…GIGA), 337–357 (FVAA…LFMI), 373–393 (LGGL…TTLS), 427–447 (LGIL…VYSI), 472–492 (ILML…GLFP), 522–542 (GITP…LLLI), 591–611 (LVII…SVPF), 623–643 (VFEG…IFAK), 646–666 (LFSI…FIFF), 671–691 (LALT…LCFY), 707–727 (LTNA…GLIG), and 764–784 (MDTL…YTMI).

The protein belongs to the CPA3 antiporters (TC 2.A.63) subunit A family. In terms of assembly, may form a heterooligomeric complex that consists of seven subunits: mnhA1, mnhB1, mnhC1, mnhD1, mnhE1, mnhF1 and mnhG1.

It localises to the cell membrane. In terms of biological role, mnh complex is a Na(+)/H(+) antiporter involved in Na(+) excretion. The sequence is that of Na(+)/H(+) antiporter subunit A1 (mnhA1) from Staphylococcus epidermidis (strain ATCC 35984 / DSM 28319 / BCRC 17069 / CCUG 31568 / BM 3577 / RP62A).